Consider the following 152-residue polypeptide: Small ribosomal subunit protein bS6 (152 aa).

The disordered stretch occupies residues histidine 96 to alanine 152.

The protein belongs to the bacterial ribosomal protein bS6 family.

Functionally, binds together with bS18 to 16S ribosomal RNA. This Rhizobium etli (strain ATCC 51251 / DSM 11541 / JCM 21823 / NBRC 15573 / CFN 42) protein is Small ribosomal subunit protein bS6.